The following is a 117-amino-acid chain: NADH-ubiquinone oxidoreductase chain 3 (117 aa).

Helical transmembrane passes span 8 to 28 (LIYF…SFIF), 61 to 81 (LVAI…PWAV), and 86 to 106 (IGFF…IGFI).

Belongs to the complex I subunit 3 family.

The protein localises to the mitochondrion membrane. It carries out the reaction a ubiquinone + NADH + 5 H(+)(in) = a ubiquinol + NAD(+) + 4 H(+)(out). Core subunit of the mitochondrial membrane respiratory chain NADH dehydrogenase (Complex I) that is believed to belong to the minimal assembly required for catalysis. Complex I functions in the transfer of electrons from NADH to the respiratory chain. The immediate electron acceptor for the enzyme is believed to be ubiquinone. The sequence is that of NADH-ubiquinone oxidoreductase chain 3 (ND3) from Tetraselmis subcordiformis (Marine green alga).